Consider the following 541-residue polypeptide: Chaperonin GroEL (541 aa).

ATP contacts are provided by residues 29–32, 86–90, Gly413, 476–478, and Asp492; these read TLGP, DGTTT, and NAA.

The protein belongs to the chaperonin (HSP60) family. Forms a cylinder of 14 subunits composed of two heptameric rings stacked back-to-back. Interacts with the co-chaperonin GroES.

It is found in the cytoplasm. The enzyme catalyses ATP + H2O + a folded polypeptide = ADP + phosphate + an unfolded polypeptide.. Its function is as follows. Together with its co-chaperonin GroES, plays an essential role in assisting protein folding. The GroEL-GroES system forms a nano-cage that allows encapsulation of the non-native substrate proteins and provides a physical environment optimized to promote and accelerate protein folding. The chain is Chaperonin GroEL from Streptococcus equi subsp. zooepidemicus (strain H70).